The sequence spans 561 residues: Dihydroxy-acid dehydratase (561 aa).

A [2Fe-2S] cluster-binding site is contributed by Cys50. Asp82 provides a ligand contact to Mg(2+). Cys123 lines the [2Fe-2S] cluster pocket. The Mg(2+) site is built by Asp124 and Lys125. Lys125 carries the N6-carboxylysine modification. Cys195 contacts [2Fe-2S] cluster. Glu447 serves as a coordination point for Mg(2+). Ser473 functions as the Proton acceptor in the catalytic mechanism.

Belongs to the IlvD/Edd family. In terms of assembly, homodimer. Requires [2Fe-2S] cluster as cofactor. The cofactor is Mg(2+).

It carries out the reaction (2R)-2,3-dihydroxy-3-methylbutanoate = 3-methyl-2-oxobutanoate + H2O. The enzyme catalyses (2R,3R)-2,3-dihydroxy-3-methylpentanoate = (S)-3-methyl-2-oxopentanoate + H2O. It participates in amino-acid biosynthesis; L-isoleucine biosynthesis; L-isoleucine from 2-oxobutanoate: step 3/4. It functions in the pathway amino-acid biosynthesis; L-valine biosynthesis; L-valine from pyruvate: step 3/4. Functionally, functions in the biosynthesis of branched-chain amino acids. Catalyzes the dehydration of (2R,3R)-2,3-dihydroxy-3-methylpentanoate (2,3-dihydroxy-3-methylvalerate) into 2-oxo-3-methylpentanoate (2-oxo-3-methylvalerate) and of (2R)-2,3-dihydroxy-3-methylbutanoate (2,3-dihydroxyisovalerate) into 2-oxo-3-methylbutanoate (2-oxoisovalerate), the penultimate precursor to L-isoleucine and L-valine, respectively. This is Dihydroxy-acid dehydratase from Chloroflexus aurantiacus (strain ATCC 29366 / DSM 635 / J-10-fl).